The primary structure comprises 504 residues: Cytochrome P450 3A41 (504 aa).

Cys443 contributes to the heme binding site.

The protein belongs to the cytochrome P450 family. It depends on heme as a cofactor. As to expression, expressed in liver. Also expressed in the kidneys of female mice, with traces in the stomach, ovary, and heart of female mice and in the testis of male mice.

The protein resides in the endoplasmic reticulum membrane. Its subcellular location is the microsome membrane. The enzyme catalyses an organic molecule + reduced [NADPH--hemoprotein reductase] + O2 = an alcohol + oxidized [NADPH--hemoprotein reductase] + H2O + H(+). The polypeptide is Cytochrome P450 3A41 (Cyp3a41a) (Mus musculus (Mouse)).